Here is a 321-residue protein sequence, read N- to C-terminus: D-alanine--D-alanine ligase (321 aa).

The ATP-grasp domain maps to 103–303; it reads KKILTPENIP…YVALCRMIVE (201 aa). 129–186 contacts ATP; it reads PLPRPYVLKPVNEGSSVGVAIIDESFNDGQPIRKDQIDPWKNFKTLLAEPFIKGRELT. The Mg(2+) site is built by D254, E270, and N272.

This sequence belongs to the D-alanine--D-alanine ligase family. Requires Mg(2+) as cofactor. The cofactor is Mn(2+).

It is found in the cytoplasm. The enzyme catalyses 2 D-alanine + ATP = D-alanyl-D-alanine + ADP + phosphate + H(+). Its pathway is cell wall biogenesis; peptidoglycan biosynthesis. Functionally, cell wall formation. The chain is D-alanine--D-alanine ligase from Zymomonas mobilis subsp. mobilis (strain ATCC 31821 / ZM4 / CP4).